Here is a 284-residue protein sequence, read N- to C-terminus: MGQKHGVDTRGKGAEFCGCWEILTEFINGSSASFDDLPDDCLAIISSFTSTPRDAFLAALVSKSFGLQFNSDSVWEKFLPPPDYVSLLPKSRVFSSKKELYFALCDPFPNHNGKMSFRLDKASGKKCVMLSAKKLLISRVVNPKYWKWISIPESRFDEVPELLNIDSFDIRGVLNTRIISPGTHYSAYIVYTKTSHFNGFQTSPIQAGVGFQRHGMSKTFIRFDSKKRQDGWMEAKIGDFYNEGGLIGFNLIEVSVVDVARYPHMNMKSGLIIEGIEFRPKDSR.

Residues alanine 32–proline 80 form the F-box domain.

This chain is F-box protein PP2-B5 (PP2B5), found in Arabidopsis thaliana (Mouse-ear cress).